The sequence spans 475 residues: Cobyric acid synthase (475 aa).

In terms of domain architecture, GATase cobBQ-type spans 244–431 (KLNVVVPVLT…LHGFFDEADV (188 aa)). C325 functions as the Nucleophile in the catalytic mechanism. The active site involves H423.

Belongs to the CobB/CobQ family. CobQ subfamily.

It functions in the pathway cofactor biosynthesis; adenosylcobalamin biosynthesis. Catalyzes amidations at positions B, D, E, and G on adenosylcobyrinic A,C-diamide. NH(2) groups are provided by glutamine, and one molecule of ATP is hydrogenolyzed for each amidation. The sequence is that of Cobyric acid synthase from Vibrio campbellii (strain ATCC BAA-1116).